A 163-amino-acid polypeptide reads, in one-letter code: Putative 4-hydroxy-4-methyl-2-oxoglutarate aldolase (163 aa).

Substrate contacts are provided by residues 79 to 82 and arginine 101; that span reads GDQL. Aspartate 102 lines the a divalent metal cation pocket.

It belongs to the class II aldolase/RraA-like family. As to quaternary structure, homotrimer. A divalent metal cation serves as cofactor.

It catalyses the reaction 4-hydroxy-4-methyl-2-oxoglutarate = 2 pyruvate. It carries out the reaction oxaloacetate + H(+) = pyruvate + CO2. Its function is as follows. Catalyzes the aldol cleavage of 4-hydroxy-4-methyl-2-oxoglutarate (HMG) into 2 molecules of pyruvate. Also contains a secondary oxaloacetate (OAA) decarboxylase activity due to the common pyruvate enolate transition state formed following C-C bond cleavage in the retro-aldol and decarboxylation reactions. This chain is Putative 4-hydroxy-4-methyl-2-oxoglutarate aldolase, found in Dechloromonas aromatica (strain RCB).